The following is a 420-amino-acid chain: MDVLSVSEINAQIKALLEATFLQVRVQGEVSNLTIHKVSGHAYFSLKDSQSVIRCVLFKGNANRLKFALKEGQEMVVFGGISVYVPRGDYQINCFEIEPKEIGSLTLALEQLKEKLRLKGYFDKENKLPKPHFPKRVAVITSQNSAAWADMQKIASKRWPICELVCINTLMQGEGCVQSVVESIAYADSFHDTRNAFDAIVVARGGGSMEDLYSFNDEKIADALYLAKTFSMSAIGHESDFLLSDLVADLRASTPSNAMEILLPSSDEWLQRLDGFNVKLHRSFKILLHQKKAHLEHLADFLKRLSFENKHHLNALKLEQLKIALENKTLEFLRFKKTLLEKISTQALTSPFLQTKTERLNRLENALKLAHANLKLPQFGAFLSKNNQAIELEALKAGDKIELSNEKARASAEILSVDRV.

The protein belongs to the XseA family. Heterooligomer composed of large and small subunits.

It is found in the cytoplasm. The catalysed reaction is Exonucleolytic cleavage in either 5'- to 3'- or 3'- to 5'-direction to yield nucleoside 5'-phosphates.. In terms of biological role, bidirectionally degrades single-stranded DNA into large acid-insoluble oligonucleotides, which are then degraded further into small acid-soluble oligonucleotides. This chain is Exodeoxyribonuclease 7 large subunit, found in Helicobacter pylori (strain HPAG1).